Here is a 345-residue protein sequence, read N- to C-terminus: Dihydroorotate dehydrogenase (quinone) (345 aa).

FMN-binding positions include Ala-65–Lys-69 and Thr-89. Position 69 (Lys-69) interacts with substrate. Substrate is bound at residue Asn-114 to Phe-118. Asn-142 and Asn-175 together coordinate FMN. Asn-175 serves as a coordination point for substrate. The Nucleophile role is filled by Ser-178. Asn-180 serves as a coordination point for substrate. FMN is bound by residues Lys-220 and Thr-248. Asn-249–Thr-250 serves as a coordination point for substrate. FMN is bound by residues Gly-271, Gly-300, and Tyr-321–Thr-322.

This sequence belongs to the dihydroorotate dehydrogenase family. Type 2 subfamily. In terms of assembly, monomer. FMN is required as a cofactor.

The protein localises to the cell membrane. The enzyme catalyses (S)-dihydroorotate + a quinone = orotate + a quinol. It participates in pyrimidine metabolism; UMP biosynthesis via de novo pathway; orotate from (S)-dihydroorotate (quinone route): step 1/1. Catalyzes the conversion of dihydroorotate to orotate with quinone as electron acceptor. In Burkholderia lata (strain ATCC 17760 / DSM 23089 / LMG 22485 / NCIMB 9086 / R18194 / 383), this protein is Dihydroorotate dehydrogenase (quinone).